A 513-amino-acid polypeptide reads, in one-letter code: Lysine--tRNA ligase (513 aa).

Residues glutamate 423 and glutamate 430 each contribute to the Mg(2+) site.

It belongs to the class-II aminoacyl-tRNA synthetase family. Homodimer. Mg(2+) serves as cofactor.

The protein resides in the cytoplasm. The enzyme catalyses tRNA(Lys) + L-lysine + ATP = L-lysyl-tRNA(Lys) + AMP + diphosphate. In Anaeromyxobacter dehalogenans (strain 2CP-C), this protein is Lysine--tRNA ligase.